The sequence spans 117 residues: Large ribosomal subunit protein bL17 (117 aa).

It belongs to the bacterial ribosomal protein bL17 family. As to quaternary structure, part of the 50S ribosomal subunit. Contacts protein L32.

The chain is Large ribosomal subunit protein bL17 from Campylobacter lari (strain RM2100 / D67 / ATCC BAA-1060).